We begin with the raw amino-acid sequence, 126 residues long: Fluoride-specific ion channel FluC (126 aa).

A run of 4 helical transmembrane segments spans residues 5–25 (ILVAAGGAIGASLRYLLGAGV), 37–57 (VAIMMANVLGSIAMGFFVVWA), 65–85 (LSPFVMTGVLGGFTTFSAFSL), and 101–121 (LYVALSVGLSVFGLMAGLWVA). The Na(+) site is built by Gly75 and Thr78.

Belongs to the fluoride channel Fluc/FEX (TC 1.A.43) family.

Its subcellular location is the cell inner membrane. The enzyme catalyses fluoride(in) = fluoride(out). Na(+) is not transported, but it plays an essential structural role and its presence is essential for fluoride channel function. In terms of biological role, fluoride-specific ion channel. Important for reducing fluoride concentration in the cell, thus reducing its toxicity. This chain is Fluoride-specific ion channel FluC, found in Roseobacter denitrificans (strain ATCC 33942 / OCh 114) (Erythrobacter sp. (strain OCh 114)).